A 44-amino-acid chain; its full sequence is Photosystem I reaction center subunit IX (44 aa).

Residues 7–27 form a helical membrane-spanning segment; it reads YLSTAPVLATLWFSSLAGLLI.

Belongs to the PsaJ family.

Its subcellular location is the plastid. The protein localises to the chloroplast thylakoid membrane. In terms of biological role, may help in the organization of the PsaE and PsaF subunits. The polypeptide is Photosystem I reaction center subunit IX (Welwitschia mirabilis (Tree tumbo)).